A 183-amino-acid polypeptide reads, in one-letter code: Large ribosomal subunit protein uL6 (183 aa).

Belongs to the universal ribosomal protein uL6 family. Part of the 50S ribosomal subunit.

In terms of biological role, this protein binds to the 23S rRNA, and is important in its secondary structure. It is located near the subunit interface in the base of the L7/L12 stalk, and near the tRNA binding site of the peptidyltransferase center. The polypeptide is Large ribosomal subunit protein uL6 (Methanococcus aeolicus (strain ATCC BAA-1280 / DSM 17508 / OCM 812 / Nankai-3)).